We begin with the raw amino-acid sequence, 259 residues long: Aspartate/glutamate leucyltransferase (259 aa).

The protein belongs to the R-transferase family. Bpt subfamily.

The protein resides in the cytoplasm. It carries out the reaction N-terminal L-glutamyl-[protein] + L-leucyl-tRNA(Leu) = N-terminal L-leucyl-L-glutamyl-[protein] + tRNA(Leu) + H(+). The enzyme catalyses N-terminal L-aspartyl-[protein] + L-leucyl-tRNA(Leu) = N-terminal L-leucyl-L-aspartyl-[protein] + tRNA(Leu) + H(+). Functions in the N-end rule pathway of protein degradation where it conjugates Leu from its aminoacyl-tRNA to the N-termini of proteins containing an N-terminal aspartate or glutamate. The sequence is that of Aspartate/glutamate leucyltransferase from Sinorhizobium medicae (strain WSM419) (Ensifer medicae).